Reading from the N-terminus, the 147-residue chain is MKVILKVDVKGQGKAGEVKNVADAYAKNVLFKKNLAVEATPGNLKAFAAKERRAEEAAEEELNEAKRLKEKLEKETIAVTTKAGEGGRVFGSVTSKQIADALKSMGYKIDKRKIELEHPIKALGFTKVPVKLHHDVVATLNVHVQEA.

This sequence belongs to the bacterial ribosomal protein bL9 family.

In terms of biological role, binds to the 23S rRNA. The sequence is that of Large ribosomal subunit protein bL9 from Exiguobacterium sp. (strain ATCC BAA-1283 / AT1b).